The following is a 525-amino-acid chain: GMP synthase [glutamine-hydrolyzing] (525 aa).

Residues 8–207 (KILILDFGSQ…AVAICGCGTN (200 aa)) enclose the Glutamine amidotransferase type-1 domain. Cys85 (nucleophile) is an active-site residue. Active-site residues include His181 and Glu183. In terms of domain architecture, GMPS ATP-PPase spans 208-400 (WKPSSIIEDA…LGLPYNMLYR (193 aa)). 235–241 (SGGVDSS) lines the ATP pocket.

In terms of assembly, homodimer.

The catalysed reaction is XMP + L-glutamine + ATP + H2O = GMP + L-glutamate + AMP + diphosphate + 2 H(+). The protein operates within purine metabolism; GMP biosynthesis; GMP from XMP (L-Gln route): step 1/1. Functionally, catalyzes the synthesis of GMP from XMP. The sequence is that of GMP synthase [glutamine-hydrolyzing] from Shewanella denitrificans (strain OS217 / ATCC BAA-1090 / DSM 15013).